A 340-amino-acid polypeptide reads, in one-letter code: Ferredoxin--NADP reductase (340 aa).

7 residues coordinate FAD: D33, Q41, Y46, A86, F120, D286, and T327.

It belongs to the ferredoxin--NADP reductase type 2 family. As to quaternary structure, homodimer. It depends on FAD as a cofactor.

It carries out the reaction 2 reduced [2Fe-2S]-[ferredoxin] + NADP(+) + H(+) = 2 oxidized [2Fe-2S]-[ferredoxin] + NADPH. The polypeptide is Ferredoxin--NADP reductase (Rickettsia rickettsii (strain Sheila Smith)).